A 68-amino-acid polypeptide reads, in one-letter code: Beta-defensin 1 (68 aa).

A signal peptide spans 1–21; sequence MRTSYLLLFTLCLLLSEMASG. Residues 22 to 32 constitute a propeptide that is removed on maturation; that stretch reads DNFLTGLGHRS. 3 disulfide bridges follow: cysteine 37-cysteine 66, cysteine 44-cysteine 59, and cysteine 49-cysteine 67.

The protein belongs to the beta-defensin family. Monomer. Homodimer.

The protein localises to the secreted. It is found in the membrane. In terms of biological role, has bactericidal activity. May act as a ligand for C-C chemokine receptor CCR6. Positively regulates the sperm motility and bactericidal activity in a CCR6-dependent manner. Binds to CCR6 and triggers Ca2+ mobilization in the sperm which is important for its motility. This chain is Beta-defensin 1 (DEFB1), found in Allochrocebus preussi (Preuss's monkey).